We begin with the raw amino-acid sequence, 203 residues long: Outer-membrane lipoprotein carrier protein (203 aa).

Residues methionine 1–alanine 21 form the signal peptide. A disordered region spans residues aspartate 184–lysine 203.

Belongs to the LolA family. Monomer.

Its subcellular location is the periplasm. Functionally, participates in the translocation of lipoproteins from the inner membrane to the outer membrane. Only forms a complex with a lipoprotein if the residue after the N-terminal Cys is not an aspartate (The Asp acts as a targeting signal to indicate that the lipoprotein should stay in the inner membrane). The protein is Outer-membrane lipoprotein carrier protein of Klebsiella pneumoniae (strain 342).